We begin with the raw amino-acid sequence, 196 residues long: PRADC1-like protein (196 aa).

A signal peptide spans 1-18 (MLIAWLVLAATLSRSIRA). In terms of domain architecture, PA spans 73–171 (ITDPPGACQE…STLQRLKRVH (99 aa)). Residue asparagine 179 is glycosylated (N-linked (GlcNAc...) asparagine).

Its subcellular location is the secreted. Its function is as follows. May be involved in iversification of muscle cell fates. The protein is PRADC1-like protein of Drosophila melanogaster (Fruit fly).